A 289-amino-acid chain; its full sequence is WUSCHEL-related homeobox 1 (289 aa).

The segment covering 1-11 (MDHMQQQQRQQ) has biased composition (low complexity). The segment at 1–34 (MDHMQQQQRQQVGGGGGEEVAGRGGVPVCRPSGT) is disordered. The span at 12–25 (VGGGGGEEVAGRGG) shows a compositional bias: gly residues. A DNA-binding region (homeobox; WUS-type) is located at residues 31 to 96 (PSGTRWTPTT…NHKARERQKK (66 aa)).

This sequence belongs to the WUS homeobox family. Interacts with TPR1, TPR2 and TPR3. Expressed in young leaf primordia. Expressed in branch an floral meristems. Transiently expressed in the shoot apex.

The protein localises to the nucleus. Functionally, transcription repressor required for the formation and development of tiller buds and panicles. Required for tiller formation and female sterility. Required for the early developmental stages of axillary meristem formation. Plays a role in maintaining the axillary premeristem zone and in promoting the formation of the axillary meristem by promoting OSH1 expression. Does not seem to be involved in maintenance of the shoot apical meristem (SAM). The protein is WUSCHEL-related homeobox 1 of Oryza sativa subsp. japonica (Rice).